Here is a 309-residue protein sequence, read N- to C-terminus: Flavonol sulfotransferase-like (309 aa).

Residue 59–64 coordinates 3'-phosphoadenylyl sulfate; the sequence is KTGTTW. Histidine 119 acts as the Proton acceptor in catalysis. 3'-phosphoadenylyl sulfate is bound by residues arginine 141, serine 149, tyrosine 207, and 274–276; that span reads RKG.

It belongs to the sulfotransferase 1 family.

It localises to the cytoplasm. The chain is Flavonol sulfotransferase-like from Flaveria bidentis (Coastal plain yellowtops).